Reading from the N-terminus, the 72-residue chain is Conotoxin Vc6.16 (72 aa).

The first 19 residues, 1 to 19 (MQKLIILLLVAAVLMSTQA), serve as a signal peptide directing secretion. The propeptide occupies 20–44 (LFQEKRPKEKIDLLSKRKTDAEKQQ). 3 cysteine pairs are disulfide-bonded: cysteine 48-cysteine 62, cysteine 55-cysteine 66, and cysteine 61-cysteine 71.

The protein belongs to the conotoxin O2 superfamily. Expressed by the venom duct.

Its subcellular location is the secreted. Its function is as follows. Inhibits voltage-gated ion channels. This chain is Conotoxin Vc6.16, found in Conus victoriae (Queen Victoria cone).